We begin with the raw amino-acid sequence, 266 residues long: Mitochondrial intermembrane space import and assembly protein 40 (266 aa).

Residues 1-28 (MFRQVSVRALRRAAGRSVCASRAQMVRH) constitute a mitochondrion transit peptide. Residues 29 to 44 (SSTLGGGKGSYNLDMP) are Mitochondrial matrix-facing. The chain crosses the membrane as a helical; Signal-anchor for type II membrane protein span at residues 45-61 (ALALAAGVTLLAGYMVY). The Mitochondrial intermembrane portion of the chain corresponds to 62–266 (PRAPKAKQAA…AESAKSDEGH (205 aa)). The span at 87–98 (ASLQASAPVQAT) shows a compositional bias: polar residues. The segment at 87–180 (ASLQASAPVQ…GQQGAYNPDT (94 aa)) is disordered. Low complexity-rich tracts occupy residues 130–157 (AEVGETQAEQAPAVETEQAAEAEQAAEA) and 165–175 (AGEAAQGQQGA). Disulfide bonds link Cys-187–Cys-189, Cys-198–Cys-231, and Cys-208–Cys-221. A CHCH domain is found at 195 to 239 (HGPCGEEFKAAFACFVYSEAEPKGIDCVEKFQVMQDCFRQHPEHY). 2 consecutive short sequence motifs (cx9C motif) follow at residues 198-208 (CGEEFKAAFAC) and 221-231 (CVEKFQVMQDC). The disordered stretch occupies residues 242–266 (QLESEEQAVRETEAAAESAKSDEGH). Positions 248–266 (QAVRETEAAAESAKSDEGH) are enriched in basic and acidic residues.

In terms of assembly, monomer. Cu(2+) is required as a cofactor. The cofactor is Zn(2+).

It is found in the mitochondrion inner membrane. Required for the import and folding of small cysteine-containing proteins (small Tim) in the mitochondrial intermembrane space (IMS). Forms a redox cycle with ERV1 that involves a disulfide relay system. Precursor proteins to be imported into the IMS are translocated in their reduced form into the mitochondria. The oxidized form of MIA40 forms a transient intermolecular disulfide bridge with the reduced precursor protein, resulting in oxidation of the precursor protein that now contains an intramolecular disulfide bond and is able to undergo folding in the IMS. In Eremothecium gossypii (strain ATCC 10895 / CBS 109.51 / FGSC 9923 / NRRL Y-1056) (Yeast), this protein is Mitochondrial intermembrane space import and assembly protein 40 (MIA40).